The chain runs to 583 residues: Aspartyl protease APCB1 (583 aa).

A helical transmembrane segment spans residues 83 to 103; it reads LVLGLLGISLLAVAFYASVFP. A Peptidase A1 domain is found at 203–564; it reads YYTRILVGKP…DNVKRRIGWM (362 aa). Residues Asp-223 and Asp-431 contribute to the active site.

This sequence belongs to the peptidase A1 family. Interacts with BAG6 and BAGP1.

The protein resides in the membrane. Its function is as follows. Involved in proteolytic processing of BAG6 and plant basal immunity. This is Aspartyl protease APCB1 from Arabidopsis thaliana (Mouse-ear cress).